The chain runs to 654 residues: Protein LYK2 (654 aa).

The first 25 residues, 1–25 (MAVSVSKQYMTSLVVILLFISLSSL), serve as a signal peptide directing secretion. Topologically, residues 26–241 (SPTSTSHSCD…PSKKKRSKMK (216 aa)) are extracellular. 3 cysteine pairs are disulfide-bonded: Cys-50-Cys-102, Cys-57-Cys-163, and Cys-100-Cys-161. Residues Asn-103, Asn-170, Asn-193, and Asn-204 are each glycosylated (N-linked (GlcNAc...) asparagine). Residues 177 to 217 (YPVGVRDSVSSLAVRFNTTEDAIVSANNKSGVVPLKPALIP) form a LysM; degenerate repeat. The interval 218–238 (LDHKPEKQGSRKRNPSKKKRS) is disordered. Basic residues predominate over residues 227–238 (SRKRNPSKKKRS). Residues 242–262 (LMIAVSSAIAGVCGLVTLMVF) form a helical membrane-spanning segment. The Cytoplasmic portion of the chain corresponds to 263-654 (GYLHWKKETQ…PLVKKSSIID (392 aa)). Residues 324-619 (TPRKPVLEIY…EIAERVSRLV (296 aa)) form the Protein kinase domain. ATP-binding positions include 330–338 (LEIYAFEEL) and Lys-368.

Belongs to the protein kinase superfamily. Ser/Thr protein kinase family.

It is found in the cell membrane. Functionally, may recognize microbe-derived N-acetylglucosamine (NAG)-containing ligands. The polypeptide is Protein LYK2 (LYK2) (Arabidopsis thaliana (Mouse-ear cress)).